Reading from the N-terminus, the 392-residue chain is Ceramide phosphoethanolamine synthase (392 aa).

Residues 1-10 (MIGPSSQISK) are Lumenal-facing. A helical membrane pass occupies residues 11 to 31 (ILLTLLFLLIIFYVFMDVELY). At 32-140 (LRIHNYAIER…MFDNVIGFSR (109 aa)) the chain is on the cytoplasmic side. The segment covering 59–82 (SESGSGSIGGSSSSSSSSSSSTST) has biased composition (low complexity). The disordered stretch occupies residues 59-91 (SESGSGSIGGSSSSSSSSSSSTSTKLPTAGDRQ). The chain crosses the membrane as a helical span at residues 141–161 (STFITPNMISFFHVGVACLAG). Topologically, residues 162–212 (KLVASDSLGYRRLGVLLFQIRTFLDDLDGHVARVRKHIRGERSEIGTSGYY) are lumenal. Residues 213–233 (VDGLCDGLGCIALLLGIFFYL) traverse the membrane as a helical segment. At 234-271 (KNNPPRRGYSIIPMSDSKLPEPTMMIPKMKATTRKVAK) the chain is on the cytoplasmic side. Residues 272-288 (NVISFTGQLLLSSTAWN) form a helical membrane-spanning segment. The Lumenal portion of the chain corresponds to 289-319 (RYIAVYQNMLEREDVSGNQSHCQDYVFKSTW). A helical membrane pass occupies residues 320 to 340 (FFCVAWMWRIVNVHALLHCVL). Topologically, residues 341–356 (LSIFCDKLWDFLRAIR) are cytoplasmic. Residues 357 to 377 (YSGYIILLVAICLTEMHILEA) form a helical membrane-spanning segment. At 378–392 (QNYIFNSTACSNISL) the chain is on the lumenal side.

This sequence belongs to the CDP-alcohol phosphatidyltransferase class-I family. Mn(2+) is required as a cofactor.

The protein localises to the membrane. It localises to the golgi apparatus membrane. The protein resides in the cell membrane. The catalysed reaction is CDP-ethanolamine + an N-acylsphing-4-enine = an N-acylsphing-4-enine 1-phosphoethanolamine + CMP + H(+). It carries out the reaction CDP-ethanolamine + an N-acyl-sphingoid base = an N-acyl-sphingoid 1-phosphoethanolamine + CMP + H(+). Its function is as follows. Catalyzes the biosynthesis of ceramide phosphoethanolamine (CPE) through the transfer of a phosphatidyl head group from cytidine 5'-diphosphate (CDP)-ethanolamine on to the primary hydroxyl of ceramide. In Drosophila melanogaster (Fruit fly), this protein is Ceramide phosphoethanolamine synthase.